The primary structure comprises 315 residues: tRNA pseudouridine synthase B (315 aa).

D54 (nucleophile) is an active-site residue.

This sequence belongs to the pseudouridine synthase TruB family. Type 1 subfamily.

The enzyme catalyses uridine(55) in tRNA = pseudouridine(55) in tRNA. Responsible for synthesis of pseudouridine from uracil-55 in the psi GC loop of transfer RNAs. The polypeptide is tRNA pseudouridine synthase B (Cupriavidus pinatubonensis (strain JMP 134 / LMG 1197) (Cupriavidus necator (strain JMP 134))).